Reading from the N-terminus, the 46-residue chain is Esculentin-1a/b (46 aa).

Cys40 and Cys46 are oxidised to a cystine.

Belongs to the frog skin active peptide (FSAP) family. Esculentin subfamily. Expressed by the skin glands.

It localises to the secreted. Its function is as follows. Antimicrobial peptide. Stimulates insulin secretion by BRIN-BD11 cells in vitro. Shows hemolytic activity. The chain is Esculentin-1a/b from Pelophylax ridibundus (Marsh frog).